A 340-amino-acid polypeptide reads, in one-letter code: Terpene synthase 29 (340 aa).

Mg(2+)-binding residues include Asp-132, Glu-197, Asn-257, Ser-261, and Glu-265. The DDXXXXD motif motif lies at 132–138; sequence DEPDILE. Positions 257 to 265 match the NSE/DTE motif motif; that stretch reads NDILSFYKE.

Belongs to the trichodiene synthase family. Mg(2+) is required as a cofactor.

Its function is as follows. Terpene cyclase that catalyzes the cyclization of farnesyl diphosphate (FPP) to a single major terpene scaffold whose chemical structure is still unknown. This is Terpene synthase 29 from Postia placenta (strain ATCC 44394 / Madison 698-R) (Brown rot fungus).